The chain runs to 196 residues: Orotate phosphoribosyltransferase (196 aa).

117-125 (EDIVTTGLS) contributes to the 5-phospho-alpha-D-ribose 1-diphosphate binding site. Orotate contacts are provided by Thr-121 and Arg-149.

Belongs to the purine/pyrimidine phosphoribosyltransferase family. PyrE subfamily. As to quaternary structure, homodimer. Requires Mg(2+) as cofactor.

The enzyme catalyses orotidine 5'-phosphate + diphosphate = orotate + 5-phospho-alpha-D-ribose 1-diphosphate. It functions in the pathway pyrimidine metabolism; UMP biosynthesis via de novo pathway; UMP from orotate: step 1/2. Catalyzes the transfer of a ribosyl phosphate group from 5-phosphoribose 1-diphosphate to orotate, leading to the formation of orotidine monophosphate (OMP). This is Orotate phosphoribosyltransferase from Methylorubrum populi (strain ATCC BAA-705 / NCIMB 13946 / BJ001) (Methylobacterium populi).